We begin with the raw amino-acid sequence, 171 residues long: 3-hydroxydecanoyl-[acyl-carrier-protein] dehydratase (171 aa).

His70 is an active-site residue.

Belongs to the thioester dehydratase family. FabA subfamily. As to quaternary structure, homodimer.

It is found in the cytoplasm. The enzyme catalyses a (3R)-hydroxyacyl-[ACP] = a (2E)-enoyl-[ACP] + H2O. It catalyses the reaction (3R)-hydroxydecanoyl-[ACP] = (2E)-decenoyl-[ACP] + H2O. It carries out the reaction (2E)-decenoyl-[ACP] = (3Z)-decenoyl-[ACP]. The protein operates within lipid metabolism; fatty acid biosynthesis. Functionally, necessary for the introduction of cis unsaturation into fatty acids. Catalyzes the dehydration of (3R)-3-hydroxydecanoyl-ACP to E-(2)-decenoyl-ACP and then its isomerization to Z-(3)-decenoyl-ACP. Can catalyze the dehydratase reaction for beta-hydroxyacyl-ACPs with saturated chain lengths up to 16:0, being most active on intermediate chain length. This is 3-hydroxydecanoyl-[acyl-carrier-protein] dehydratase from Methylococcus capsulatus (strain ATCC 33009 / NCIMB 11132 / Bath).